The sequence spans 285 residues: 1-deoxypentalenic acid 11-beta-hydroxylase (285 aa).

R117 contributes to the substrate binding site. Fe cation-binding residues include H137 and D139. Residues 137–139 (HQD) and W153 each bind 2-oxoglutarate. R188 provides a ligand contact to substrate. H226 is a binding site for Fe cation. 2 residues coordinate 2-oxoglutarate: S228 and R240.

The protein belongs to the PhyH family. Requires Fe cation as cofactor. L-ascorbate is required as a cofactor.

It catalyses the reaction 1-deoxypentalenate + 2-oxoglutarate + O2 = 1-deoxy-11beta-hydroxypentalenate + succinate + CO2. The protein operates within antibiotic biosynthesis; neopentalenolactone biosynthesis. Catalyzes the conversion of 1-deoxypentalenic acid to 11-beta-hydroxy-1-deoxypentalenic acid in the biosynthesis of neopentalenolactone antibiotic. The sequence is that of 1-deoxypentalenic acid 11-beta-hydroxylase (ptlH) from Streptomyces avermitilis (strain ATCC 31267 / DSM 46492 / JCM 5070 / NBRC 14893 / NCIMB 12804 / NRRL 8165 / MA-4680).